Consider the following 453-residue polypeptide: Protein IVY1 (453 aa).

Positions 1–16 (MPDNNTEQLQGSPSSD) are enriched in polar residues. The disordered stretch occupies residues 1 to 20 (MPDNNTEQLQGSPSSDQRLR). Residues Ser59, Ser84, and Ser85 each carry the phosphoserine modification. Coiled-coil stretches lie at residues 102–122 (KRDV…SNAY) and 230–257 (IRNL…KHDF). 2 disordered regions span residues 316 to 340 (DGPY…EETG) and 353 to 453 (TSQP…SSNI). At Ser335 the chain carries Phosphoserine. A compositionally biased stretch (low complexity) spans 353-371 (TSQPSTSKTSLPKSKGSST). Composition is skewed to polar residues over residues 372 to 384 (VSTP…SSNK) and 404 to 429 (LMGT…TFKQ). A compositionally biased stretch (basic and acidic residues) spans 431-442 (SIKEDNDNHSSD). The segment covering 443 to 453 (TDGMQDQSSNI) has biased composition (polar residues).

In terms of assembly, homomultimer. Interacts with YPT7 and VPS33.

Its subcellular location is the vacuole membrane. In terms of biological role, may be required for vacuolar fusion. Overexpression leads to fragmentation of vacuoles, missorting of the vacuolar enzyme carboxypeptidase Y (CPY) to the exterior of the cell and accumulation of multivesicular bodies inside the cell. In Saccharomyces cerevisiae (strain ATCC 204508 / S288c) (Baker's yeast), this protein is Protein IVY1 (IVY1).